The chain runs to 318 residues: Thioredoxin reductase (318 aa).

Position 36–43 (36–43) interacts with FAD; it reads TGLQQGGQ. Residues Cys136 and Cys139 are joined by a disulfide bond. An FAD-binding site is contributed by 286–295; sequence DVMDHNYRQA.

The protein belongs to the class-II pyridine nucleotide-disulfide oxidoreductase family. As to quaternary structure, homodimer. The cofactor is FAD.

The protein localises to the cytoplasm. It carries out the reaction [thioredoxin]-dithiol + NADP(+) = [thioredoxin]-disulfide + NADPH + H(+). In Haemophilus influenzae (strain ATCC 51907 / DSM 11121 / KW20 / Rd), this protein is Thioredoxin reductase (trxB).